The chain runs to 148 residues: Large ribosomal subunit protein bL9 (148 aa).

It belongs to the bacterial ribosomal protein bL9 family.

In terms of biological role, binds to the 23S rRNA. The chain is Large ribosomal subunit protein bL9 from Listeria monocytogenes serotype 4b (strain CLIP80459).